We begin with the raw amino-acid sequence, 1370 residues long: DNA-directed RNA polymerase subunit beta (1370 aa).

This sequence belongs to the RNA polymerase beta chain family. The RNAP catalytic core consists of 2 alpha, 1 beta, 1 beta' and 1 omega subunit. When a sigma factor is associated with the core the holoenzyme is formed, which can initiate transcription.

It catalyses the reaction RNA(n) + a ribonucleoside 5'-triphosphate = RNA(n+1) + diphosphate. Functionally, DNA-dependent RNA polymerase catalyzes the transcription of DNA into RNA using the four ribonucleoside triphosphates as substrates. The chain is DNA-directed RNA polymerase subunit beta from Bordetella bronchiseptica (strain ATCC BAA-588 / NCTC 13252 / RB50) (Alcaligenes bronchisepticus).